The chain runs to 190 residues: Segregation and condensation protein B (190 aa).

The protein belongs to the ScpB family. In terms of assembly, homodimer. Homodimerization may be required to stabilize the binding of ScpA to the Smc head domains. Component of a cohesin-like complex composed of ScpA, ScpB and the Smc homodimer, in which ScpA and ScpB bind to the head domain of Smc. The presence of the three proteins is required for the association of the complex with DNA.

Its subcellular location is the cytoplasm. Its function is as follows. Participates in chromosomal partition during cell division. May act via the formation of a condensin-like complex containing Smc and ScpA that pull DNA away from mid-cell into both cell halves. In Bacillus cereus (strain G9842), this protein is Segregation and condensation protein B.